We begin with the raw amino-acid sequence, 264 residues long: Acyl-[acyl-carrier-protein]--UDP-N-acetylglucosamine O-acyltransferase (264 aa).

It belongs to the transferase hexapeptide repeat family. LpxA subfamily. In terms of assembly, homotrimer.

The protein localises to the cytoplasm. It carries out the reaction a (3R)-hydroxyacyl-[ACP] + UDP-N-acetyl-alpha-D-glucosamine = a UDP-3-O-[(3R)-3-hydroxyacyl]-N-acetyl-alpha-D-glucosamine + holo-[ACP]. It functions in the pathway glycolipid biosynthesis; lipid IV(A) biosynthesis; lipid IV(A) from (3R)-3-hydroxytetradecanoyl-[acyl-carrier-protein] and UDP-N-acetyl-alpha-D-glucosamine: step 1/6. Functionally, involved in the biosynthesis of lipid A, a phosphorylated glycolipid that anchors the lipopolysaccharide to the outer membrane of the cell. The chain is Acyl-[acyl-carrier-protein]--UDP-N-acetylglucosamine O-acyltransferase from Actinobacillus pleuropneumoniae serotype 7 (strain AP76).